The following is a 390-amino-acid chain: Chaperone protein DnaJ (390 aa).

One can recognise a J domain in the interval 6 to 70 (DYYEILGVPR…QKRAQYDQFG (65 aa)). A CR-type zinc finger spans residues 146-228 (GSEKEIYVTR…CHGTGKVRRK (83 aa)). Zn(2+) is bound by residues Cys159, Cys162, Cys176, Cys179, Cys202, Cys205, Cys216, and Cys219. 4 CXXCXGXG motif repeats span residues 159 to 166 (CPTCKGKG), 176 to 183 (CDMCNGTG), 202 to 209 (CPKCHGTG), and 216 to 223 (CHECHGTG).

Belongs to the DnaJ family. Homodimer. It depends on Zn(2+) as a cofactor.

The protein localises to the cytoplasm. Participates actively in the response to hyperosmotic and heat shock by preventing the aggregation of stress-denatured proteins and by disaggregating proteins, also in an autonomous, DnaK-independent fashion. Unfolded proteins bind initially to DnaJ; upon interaction with the DnaJ-bound protein, DnaK hydrolyzes its bound ATP, resulting in the formation of a stable complex. GrpE releases ADP from DnaK; ATP binding to DnaK triggers the release of the substrate protein, thus completing the reaction cycle. Several rounds of ATP-dependent interactions between DnaJ, DnaK and GrpE are required for fully efficient folding. Also involved, together with DnaK and GrpE, in the DNA replication of plasmids through activation of initiation proteins. The protein is Chaperone protein DnaJ of Dictyoglomus thermophilum (strain ATCC 35947 / DSM 3960 / H-6-12).